The sequence spans 236 residues: tRNA (guanine-N(1)-)-methyltransferase (236 aa).

S-adenosyl-L-methionine contacts are provided by residues glycine 110 and 129–134 (LGDFVL).

It belongs to the RNA methyltransferase TrmD family. As to quaternary structure, homodimer.

It localises to the cytoplasm. The catalysed reaction is guanosine(37) in tRNA + S-adenosyl-L-methionine = N(1)-methylguanosine(37) in tRNA + S-adenosyl-L-homocysteine + H(+). Specifically methylates guanosine-37 in various tRNAs. This chain is tRNA (guanine-N(1)-)-methyltransferase, found in Clostridium perfringens (strain SM101 / Type A).